Reading from the N-terminus, the 506-residue chain is UPF0522 protein A (506 aa).

Positions 1–18 are cleaved as a signal peptide; it reads MIKSLLLLISIIIGIVIS. Residues N145, N155, N330, N366, N418, and N427 are each glycosylated (N-linked (GlcNAc...) asparagine).

The protein belongs to the UPF0522 family.

The protein localises to the secreted. This Dictyostelium discoideum (Social amoeba) protein is UPF0522 protein A.